Consider the following 515-residue polypeptide: Dimethylnonatriene synthase (515 aa).

A helical transmembrane segment spans residues 3 to 23 (FLFSTLQLSLFSLALVIFGYI). His219 is a substrate binding site. Lys252 participates in a covalent cross-link: Glycyl lysine isopeptide (Lys-Gly) (interchain with G-Cter in ubiquitin). Residue Cys452 participates in heme binding.

The protein belongs to the cytochrome P450 family. It depends on heme as a cofactor. Expressed in stems, flower peduncles, receptacle of developing and mature flowers and in stigma of mature opening flower buds.

It localises to the membrane. It carries out the reaction (3S,6E)-nerolidol + reduced [NADPH--hemoprotein reductase] + O2 = (3E)-4,8-dimethylnona-1,3,7-triene + but-3-en-2-one + oxidized [NADPH--hemoprotein reductase] + 2 H2O + H(+). It catalyses the reaction (6E,10E)-geranyllinalool + reduced [NADPH--hemoprotein reductase] + O2 = (3E,7E)-4,8,12-trimethyltrideca 1,3,7,11-tetraene + but-3-en-2-one + oxidized [NADPH--hemoprotein reductase] + 2 H2O + H(+). The protein operates within secondary metabolite biosynthesis; terpenoid biosynthesis. In terms of biological role, involved in the biosynthesis of homoterpenes, attractants of herbivores parasitoids and predators (e.g. predatory mites and parasitoid wasps). Catalyzes the conversion of the C20 (E,E)-geranyllinalool to C16-homoterpene 4,8,12-trimethyltrideca-1,3,7,11-tetraene (TMTT) of the C15 (E)-nerolidol to C11-homoterpene (E)-4,8-dimethyl-1,3,7-nonatriene (DMNT); these volatile compounds are produced upon insect herbivore attack and emitted from flowers and vegetative tissues during herbivore feeding. Required during resistance responses to the fungus Alternaria brassicae. Prevents oviposition of the phloem-feeding insect cabbage whitefly (Aleyrodes proletella). This Arabidopsis thaliana (Mouse-ear cress) protein is Dimethylnonatriene synthase.